The following is a 519-amino-acid chain: Ribonuclease Y (519 aa).

Residues 3–23 (LLSLLLILLGIILGVVVGYIV) form a helical membrane-spanning segment. One can recognise a KH domain in the interval 209-269 (TVSVVNLPND…IRREIARTAL (61 aa)). In terms of domain architecture, HD spans 335–428 (VLKHSIEVAH…VAAADALSAA (94 aa)).

It belongs to the RNase Y family.

It localises to the cell membrane. Its function is as follows. Endoribonuclease that initiates mRNA decay. This is Ribonuclease Y from Staphylococcus epidermidis (strain ATCC 35984 / DSM 28319 / BCRC 17069 / CCUG 31568 / BM 3577 / RP62A).